The primary structure comprises 882 residues: Alanine--tRNA ligase (882 aa).

Zn(2+) contacts are provided by His-570, His-574, Cys-672, and His-676.

This sequence belongs to the class-II aminoacyl-tRNA synthetase family. Requires Zn(2+) as cofactor.

The protein localises to the cytoplasm. The enzyme catalyses tRNA(Ala) + L-alanine + ATP = L-alanyl-tRNA(Ala) + AMP + diphosphate. Its function is as follows. Catalyzes the attachment of alanine to tRNA(Ala) in a two-step reaction: alanine is first activated by ATP to form Ala-AMP and then transferred to the acceptor end of tRNA(Ala). Also edits incorrectly charged Ser-tRNA(Ala) and Gly-tRNA(Ala) via its editing domain. The protein is Alanine--tRNA ligase of Xanthomonas campestris pv. campestris (strain B100).